The primary structure comprises 119 residues: Protein yippee-like 3 (119 aa).

The region spanning 19 to 116 (RRYSCAHCRA…IELNHMIKDN (98 aa)) is the Yippee domain. Cys23, Cys26, Cys79, and Cys82 together coordinate Zn(2+).

Belongs to the yippee family. Post-translationally, probably ubiquitinated leading to its degradation by the proteasome.

It is found in the nucleus. The protein localises to the nucleolus. Functionally, involved in proliferation and apoptosis in myeloid precursor cells. In Bos taurus (Bovine), this protein is Protein yippee-like 3 (YPEL3).